The sequence spans 253 residues: Putative ankyrin repeat protein NMB1133/NMB1171 (253 aa).

2 ANK repeats span residues 196 to 225 and 229 to 252; these read DGYT…NPAS and EGYT…LEPR.

This Neisseria meningitidis serogroup B (strain ATCC BAA-335 / MC58) protein is Putative ankyrin repeat protein NMB1133/NMB1171.